Reading from the N-terminus, the 795-residue chain is Phenylalanine--tRNA ligase beta subunit (795 aa).

Residues 39–148 (AGEFNGVVVG…ADAPIGVDVR (110 aa)) enclose the tRNA-binding domain. The B5 domain maps to 401–476 (PKQATITLRR…RIYGYNNIPD (76 aa)). Positions 454, 460, 463, and 464 each coordinate Mg(2+). Positions 701–794 (SRFPANRRDI…LKQRFQASLR (94 aa)) constitute an FDX-ACB domain.

It belongs to the phenylalanyl-tRNA synthetase beta subunit family. Type 1 subfamily. In terms of assembly, tetramer of two alpha and two beta subunits. The cofactor is Mg(2+).

It is found in the cytoplasm. The catalysed reaction is tRNA(Phe) + L-phenylalanine + ATP = L-phenylalanyl-tRNA(Phe) + AMP + diphosphate + H(+). In Yersinia pestis, this protein is Phenylalanine--tRNA ligase beta subunit.